The chain runs to 251 residues: tRNA (guanine-N(7)-)-methyltransferase (251 aa).

S-adenosyl-L-methionine is bound by residues Glu69, Glu94, Asp121, and Asp143. Asp143 is an active-site residue. Substrate-binding residues include Lys147 and Asp179.

Belongs to the class I-like SAM-binding methyltransferase superfamily. TrmB family.

It carries out the reaction guanosine(46) in tRNA + S-adenosyl-L-methionine = N(7)-methylguanosine(46) in tRNA + S-adenosyl-L-homocysteine. It functions in the pathway tRNA modification; N(7)-methylguanine-tRNA biosynthesis. Catalyzes the formation of N(7)-methylguanine at position 46 (m7G46) in tRNA. This chain is tRNA (guanine-N(7)-)-methyltransferase, found in Rhodopseudomonas palustris (strain BisB18).